The primary structure comprises 389 residues: Adenylyltransferase and sulfurtransferase uba4 (389 aa).

ATP is bound by residues Gly-40, Asp-61, 68-72, Lys-85, and 129-130; these read SNLHR and DT. Cys-171 and Cys-174 together coordinate Zn(2+). The active-site Glycyl thioester intermediate; for adenylyltransferase activity is Cys-188. 2 residues coordinate Zn(2+): Cys-252 and Cys-255. The Rhodanese domain maps to 298–387; it reads AQRAPYLVDV…WSRQIDPNFP (90 aa). Catalysis depends on Cys-347, which acts as the Cysteine persulfide intermediate.

The protein in the N-terminal section; belongs to the HesA/MoeB/ThiF family. UBA4 subfamily. Requires Zn(2+) as cofactor.

The protein localises to the cytoplasm. It localises to the cytosol. It catalyses the reaction [molybdopterin-synthase sulfur-carrier protein]-C-terminal Gly-Gly + ATP + H(+) = [molybdopterin-synthase sulfur-carrier protein]-C-terminal Gly-Gly-AMP + diphosphate. The catalysed reaction is [molybdopterin-synthase sulfur-carrier protein]-C-terminal Gly-Gly-AMP + S-sulfanyl-L-cysteinyl-[cysteine desulfurase] + AH2 = [molybdopterin-synthase sulfur-carrier protein]-C-terminal-Gly-aminoethanethioate + L-cysteinyl-[cysteine desulfurase] + A + AMP + 2 H(+). It functions in the pathway tRNA modification; 5-methoxycarbonylmethyl-2-thiouridine-tRNA biosynthesis. The protein operates within cofactor biosynthesis; molybdopterin biosynthesis. In terms of biological role, plays a central role in 2-thiolation of mcm(5)S(2)U at tRNA wobble positions of cytosolic tRNA(Lys), tRNA(Glu) and tRNA(Gln). Also essential during biosynthesis of the molybdenum cofactor. Acts by mediating the C-terminal thiocarboxylation of sulfur carriers URM1 and CNX5/MOCS2A. Its N-terminus first activates urm1 and mocs2a as acyl-adenylates (-COAMP), then the persulfide sulfur on the catalytic cysteine is transferred to URM1 and CNX5/MOCS2A to form thiocarboxylation (-COSH) of their C-terminus. The reaction probably involves hydrogen sulfide that is generated from the persulfide intermediate and that acts as a nucleophile towards URM1 and CNX5/MOCS2A. Subsequently, a transient disulfide bond is formed. Does not use thiosulfate as sulfur donor; NFS1 probably acting as a sulfur donor for thiocarboxylation reactions. Required for growth on nitrate as a sole nitrogen source. This is Adenylyltransferase and sulfurtransferase uba4 from Ogataea parapolymorpha (strain ATCC 26012 / BCRC 20466 / JCM 22074 / NRRL Y-7560 / DL-1) (Yeast).